A 426-amino-acid chain; its full sequence is Serine hydroxymethyltransferase (426 aa).

(6S)-5,6,7,8-tetrahydrofolate is bound by residues Leu118 and 122–124 (GHL). Lys227 bears the N6-(pyridoxal phosphate)lysine mark.

It belongs to the SHMT family. Homodimer. It depends on pyridoxal 5'-phosphate as a cofactor.

It is found in the cytoplasm. It carries out the reaction (6R)-5,10-methylene-5,6,7,8-tetrahydrofolate + glycine + H2O = (6S)-5,6,7,8-tetrahydrofolate + L-serine. It functions in the pathway one-carbon metabolism; tetrahydrofolate interconversion. It participates in amino-acid biosynthesis; glycine biosynthesis; glycine from L-serine: step 1/1. Catalyzes the reversible interconversion of serine and glycine with tetrahydrofolate (THF) serving as the one-carbon carrier. This reaction serves as the major source of one-carbon groups required for the biosynthesis of purines, thymidylate, methionine, and other important biomolecules. Also exhibits THF-independent aldolase activity toward beta-hydroxyamino acids, producing glycine and aldehydes, via a retro-aldol mechanism. The sequence is that of Serine hydroxymethyltransferase from Mycobacterium leprae (strain Br4923).